The following is a 77-amino-acid chain: ATP synthase subunit 9, mitochondrial (77 aa).

Transmembrane regions (helical) follow at residues 8-28 and 45-72; these read MGAG…GNVL and LFGY…LISF.

Belongs to the ATPase C chain family. F-type ATPases have 2 components, CF(1) - the catalytic core - and CF(0) - the membrane proton channel. CF(1) has five subunits: alpha(3), beta(3), gamma(1), delta(1), epsilon(1). CF(0) has three main subunits: a, b and c.

It is found in the mitochondrion membrane. Its function is as follows. This protein is one of the chains of the nonenzymatic membrane component (F0) of mitochondrial ATPase. The sequence is that of ATP synthase subunit 9, mitochondrial (ATP9) from Petunia sp. (Petunia).